We begin with the raw amino-acid sequence, 327 residues long: Metapyrocatechase (327 aa).

2 VOC domains span residues 14-126 and 156-276; these read QLAH…IFFE and RLDH…LFGD. Fe cation-binding residues include His159, His221, and Glu272.

The protein belongs to the extradiol ring-cleavage dioxygenase family. The cofactor is Fe(2+).

It carries out the reaction catechol + O2 = (2Z,4E)-2-hydroxy-6-oxohexa-2,4-dienoate + H(+). This is Metapyrocatechase (pheB) from Geobacillus stearothermophilus (Bacillus stearothermophilus).